The primary structure comprises 492 residues: DEAD-box ATP-dependent RNA helicase RhpA (492 aa).

Residues 20–48 (PSFNDLGLKESVLKSVYEAGFTSPSPIQE) carry the Q motif motif. The region spanning 51 to 220 (IPAVLQGRDV…DKILENPIKI (170 aa)) is the Helicase ATP-binding domain. Residue 64 to 71 (AQTGTGKT) participates in ATP binding. A DEAD box motif is present at residues 168 to 171 (DESD). Residues 231–393 (DITQRFYVIN…EIPTINENQI (163 aa)) form the Helicase C-terminal domain. Residues 445-492 (AIQNPKEKTPKPSNKKTPQHERARSFKKGQHRDRHPKTNHYSKKPKRR) form a disordered region. Residues 469–492 (SFKKGQHRDRHPKTNHYSKKPKRR) show a composition bias toward basic residues.

It belongs to the DEAD box helicase family. Homodimer. Interacts with RNase J (rnj), might be a member of a minimal RNA degradosome complex.

It is found in the cytoplasm. It carries out the reaction ATP + H2O = ADP + phosphate + H(+). In terms of biological role, DEAD-box RNA helicase probably involved in RNA degradation. Unwinds dsRNA in both 5'- and 3'-directions. The protein is DEAD-box ATP-dependent RNA helicase RhpA (rhpA) of Helicobacter pylori (strain ATCC 700392 / 26695) (Campylobacter pylori).